The following is a 302-amino-acid chain: Probable E3 ubiquitin-protein ligase RZFP34 (302 aa).

The CHY-type zinc finger occupies 54–130; sequence EGIMQYGCAH…VRQVCISCGV (77 aa). Zn(2+) contacts are provided by Cys61, His63, Cys74, Cys75, Cys81, Cys84, His85, His100, Cys112, Cys115, Cys125, Cys128, Cys137, Cys140, His153, Cys154, Cys157, Cys160, His170, Cys171, Cys174, Cys177, His186, and Cys188. A CTCHY-type zinc finger spans residues 132-196; it reads MGKYFCEVCK…ACVEGAMHHD (65 aa). The RING-type; atypical zinc-finger motif lies at 197-240; sequence CPICFEYLFESTNDVSVLPCGHTIHVKCLREMEEHCQFACPLCS.

Its subcellular location is the nucleus. The catalysed reaction is S-ubiquitinyl-[E2 ubiquitin-conjugating enzyme]-L-cysteine + [acceptor protein]-L-lysine = [E2 ubiquitin-conjugating enzyme]-L-cysteine + N(6)-ubiquitinyl-[acceptor protein]-L-lysine.. It functions in the pathway protein modification; protein ubiquitination. Possesses transactivation activity in yeast cells. Involved in the regulation of stomatal aperture. May modulate the expression of genes that control stomata opening during heat shock or drought stress. This chain is Probable E3 ubiquitin-protein ligase RZFP34, found in Oryza sativa subsp. japonica (Rice).